Consider the following 421-residue polypeptide: Serine hydroxymethyltransferase (421 aa).

(6S)-5,6,7,8-tetrahydrofolate contacts are provided by residues L118 and 122–124 (GHL). K226 is subject to N6-(pyridoxal phosphate)lysine. E242 is a binding site for (6S)-5,6,7,8-tetrahydrofolate.

The protein belongs to the SHMT family. Homodimer. Requires pyridoxal 5'-phosphate as cofactor.

It is found in the cytoplasm. It carries out the reaction (6R)-5,10-methylene-5,6,7,8-tetrahydrofolate + glycine + H2O = (6S)-5,6,7,8-tetrahydrofolate + L-serine. The protein operates within one-carbon metabolism; tetrahydrofolate interconversion. It participates in amino-acid biosynthesis; glycine biosynthesis; glycine from L-serine: step 1/1. In terms of biological role, catalyzes the reversible interconversion of serine and glycine with tetrahydrofolate (THF) serving as the one-carbon carrier. This reaction serves as the major source of one-carbon groups required for the biosynthesis of purines, thymidylate, methionine, and other important biomolecules. Also exhibits THF-independent aldolase activity toward beta-hydroxyamino acids, producing glycine and aldehydes, via a retro-aldol mechanism. This Mycoplasmopsis synoviae (strain 53) (Mycoplasma synoviae) protein is Serine hydroxymethyltransferase.